The chain runs to 1529 residues: Myosin-11 (1529 aa).

The Myosin N-terminal SH3-like domain occupies 11-60 (IVGSHVWIEDSDVAWIDGLVEKINGQDVEVQATNGKKITAKLSKIYPKDM). The Myosin motor domain maps to 65 to 735 (GGVDDMTKLS…QMAELDARRT (671 aa)). ATP-binding positions include 159 to 166 (GESGAGKT) and 212 to 220 (NNNSSRFGK). Actin-binding stretches follow at residues 498-532 (LIEK…YQTF), 534-557 (THKR…AGEV), 592-616 (FPPL…KLQL), and 616-638 (LQQL…KPNN). IQ domains lie at 738–767 (LSAA…ATIS), 761–790 (LRKA…QAAA), 786–815 (RQAA…AALV), 809–838 (LHVA…TKAA), 834–863 (QTKA…GVIL), and 857–886 (LKKG…ASRE). Positions 887-1059 (TGALKEAKDM…VLRQQAVSIA (173 aa)) form a coiled coil. Basic and acidic residues predominate over residues 993–1027 (EQEKQRADDATRKFDEAQESSEDRKKKLEDTEKKA). Disordered stretches follow at residues 993–1031 (EQEK…QQLQ) and 1096–1115 (INRR…LNEK). One can recognise a Dilute domain in the interval 1163–1472 (DRIIQTIGQA…IANMRVLMTE (310 aa)).

This sequence belongs to the TRAFAC class myosin-kinesin ATPase superfamily. Myosin family. Plant myosin class XI subfamily. Homodimer.

Its subcellular location is the cytoplasm. Its function is as follows. Myosin heavy chain that is required for the cell cycle-regulated transport of various organelles and proteins for their segregation. Functions by binding with its tail domain to receptor proteins on organelles and exerting force with its N-terminal motor domain against actin filaments, thereby transporting its cargo along polarized actin cables. Involved in trafficking of Golgi stacks, mitochondria and peroxisomes. The chain is Myosin-11 (XI-E) from Arabidopsis thaliana (Mouse-ear cress).